A 143-amino-acid polypeptide reads, in one-letter code: Transcriptional regulator MraZ (143 aa).

2 consecutive SpoVT-AbrB domains span residues 5–47 and 76–119; these read EYEH…PMPV and ASDL…SAER.

This sequence belongs to the MraZ family. Forms oligomers.

Its subcellular location is the cytoplasm. The protein resides in the nucleoid. The sequence is that of Transcriptional regulator MraZ from Herpetosiphon aurantiacus (strain ATCC 23779 / DSM 785 / 114-95).